Consider the following 134-residue polypeptide: DNA-directed RNA polymerase subunit omega (134 aa).

Residues 77–108 (IDEPEPDPASLLAAGGNASASGDEEEDAPEAV) are disordered. Over residues 85–97 (ASLLAAGGNASAS) the composition is skewed to low complexity.

The protein belongs to the RNA polymerase subunit omega family. In terms of assembly, the RNAP catalytic core consists of 2 alpha, 1 beta, 1 beta' and 1 omega subunit. When a sigma factor is associated with the core the holoenzyme is formed, which can initiate transcription.

It carries out the reaction RNA(n) + a ribonucleoside 5'-triphosphate = RNA(n+1) + diphosphate. Its function is as follows. Promotes RNA polymerase assembly. Latches the N- and C-terminal regions of the beta' subunit thereby facilitating its interaction with the beta and alpha subunits. The protein is DNA-directed RNA polymerase subunit omega of Rhizobium rhizogenes (strain K84 / ATCC BAA-868) (Agrobacterium radiobacter).